A 201-amino-acid polypeptide reads, in one-letter code: UPF0098 protein MT1961 (201 aa).

Positions 125-146 (TADGETPGGGISLPNSSGQPAY) are disordered.

It belongs to the UPF0098 family.

The chain is UPF0098 protein MT1961 from Mycobacterium tuberculosis (strain CDC 1551 / Oshkosh).